Consider the following 309-residue polypeptide: UDP-N-acetylenolpyruvoylglucosamine reductase (309 aa).

The 163-residue stretch at 33–195 folds into the FAD-binding PCMH-type domain; it reads VGGQAETLFR…VRARLRTRPG (163 aa). Residue Arg-175 is part of the active site. Ser-224 serves as the catalytic Proton donor. Glu-294 is a catalytic residue.

This sequence belongs to the MurB family. Requires FAD as cofactor.

It localises to the cytoplasm. The enzyme catalyses UDP-N-acetyl-alpha-D-muramate + NADP(+) = UDP-N-acetyl-3-O-(1-carboxyvinyl)-alpha-D-glucosamine + NADPH + H(+). The protein operates within cell wall biogenesis; peptidoglycan biosynthesis. Functionally, cell wall formation. The sequence is that of UDP-N-acetylenolpyruvoylglucosamine reductase from Granulibacter bethesdensis (strain ATCC BAA-1260 / CGDNIH1).